The chain runs to 187 residues: Elongation factor P (187 aa).

This sequence belongs to the elongation factor P family.

The protein resides in the cytoplasm. It participates in protein biosynthesis; polypeptide chain elongation. In terms of biological role, involved in peptide bond synthesis. Stimulates efficient translation and peptide-bond synthesis on native or reconstituted 70S ribosomes in vitro. Probably functions indirectly by altering the affinity of the ribosome for aminoacyl-tRNA, thus increasing their reactivity as acceptors for peptidyl transferase. The chain is Elongation factor P from Frankia casuarinae (strain DSM 45818 / CECT 9043 / HFP020203 / CcI3).